A 400-amino-acid chain; its full sequence is Acetate kinase (400 aa).

Position 9 (Asn-9) interacts with Mg(2+). ATP is bound at residue Lys-16. Arg-90 contributes to the substrate binding site. Asp-147 serves as the catalytic Proton donor/acceptor. ATP-binding positions include 207–211, 282–284, and 330–334; these read HIGNG, DLR, and GIGEN. Glu-385 is a Mg(2+) binding site.

Belongs to the acetokinase family. As to quaternary structure, homodimer. Mg(2+) serves as cofactor. The cofactor is Mn(2+).

The protein localises to the cytoplasm. The enzyme catalyses acetate + ATP = acetyl phosphate + ADP. It functions in the pathway metabolic intermediate biosynthesis; acetyl-CoA biosynthesis; acetyl-CoA from acetate: step 1/2. Functionally, catalyzes the formation of acetyl phosphate from acetate and ATP. Can also catalyze the reverse reaction. This chain is Acetate kinase, found in Staphylococcus aureus (strain USA300).